A 180-amino-acid polypeptide reads, in one-letter code: Small ribosomal subunit protein uS5 (180 aa).

The 64-residue stretch at 24 to 87 (MIEKLVAVNR…EQARKNLATV (64 aa)) folds into the S5 DRBM domain.

This sequence belongs to the universal ribosomal protein uS5 family. As to quaternary structure, part of the 30S ribosomal subunit. Contacts proteins S4 and S8.

Its function is as follows. With S4 and S12 plays an important role in translational accuracy. Functionally, located at the back of the 30S subunit body where it stabilizes the conformation of the head with respect to the body. This Xanthomonas axonopodis pv. citri (strain 306) protein is Small ribosomal subunit protein uS5.